We begin with the raw amino-acid sequence, 326 residues long: Protein-arginine N-acetylglucosaminyltransferase NleB2 (326 aa).

Residues 45 to 47, Tyr69, and 216 to 219 each bind UDP-N-acetyl-alpha-D-glucosamine; these read QWF and YLDM. Positions 218–220 match the DXD motif motif; the sequence is DMD. Asp220 contacts Mn(2+). The active-site Proton acceptor is Glu250. Mn(2+)-binding residues include Asn317 and Ser319. UDP-N-acetyl-alpha-D-glucosamine-binding positions include Ser319 and 324–326; that span reads SSW.

Belongs to the glycosyltransferase NleB family. Mn(2+) serves as cofactor.

It is found in the secreted. The protein localises to the host cell. It carries out the reaction L-arginyl-[protein] + UDP-N-acetyl-alpha-D-glucosamine = N(omega)-(N-acetyl-beta-D-glucosaminyl)-L-arginyl-[protein] + UDP + H(+). Protein-arginine N-acetylglucosaminyltransferase effector that catalyzes the transfer of a single N-acetylglucosamine (GlcNAc) to a conserved arginine residue of host target proteins. In contrast to NleB1, not able to disrupt TNF signaling in infected cells. Shows a lower enzymatic activity than NleB1. The polypeptide is Protein-arginine N-acetylglucosaminyltransferase NleB2 (Escherichia coli O145:H28 (strain RM12581)).